The chain runs to 211 residues: Probable molybdenum cofactor guanylyltransferase (211 aa).

GTP is bound by residues 21–23 (LAG), Lys33, Asp84, and Asp116. Asp116 contacts Mg(2+).

It belongs to the MobA family. Requires Mg(2+) as cofactor.

It is found in the cytoplasm. It catalyses the reaction Mo-molybdopterin + GTP + H(+) = Mo-molybdopterin guanine dinucleotide + diphosphate. Its function is as follows. Transfers a GMP moiety from GTP to Mo-molybdopterin (Mo-MPT) cofactor (Moco or molybdenum cofactor) to form Mo-molybdopterin guanine dinucleotide (Mo-MGD) cofactor. The protein is Probable molybdenum cofactor guanylyltransferase of Rhodopirellula baltica (strain DSM 10527 / NCIMB 13988 / SH1).